Reading from the N-terminus, the 630-residue chain is Subtilisin-like protease 1 (630 aa).

Residues methionine 1–alanine 25 form the signal peptide. A propeptide spans glycine 26–aspartate 202 (inhibition peptide). Residues asparagine 72–leucine 125 are disordered. Over residues proline 76–lysine 87 the composition is skewed to basic and acidic residues. The span at threonine 94–glutamine 107 shows a compositional bias: polar residues. A compositionally biased stretch (basic and acidic residues) spans lysine 108–glycine 117. The Ca(2+) site is built by glutamate 129, asparagine 130, threonine 133, proline 135, and glycine 190. The interval leucine 230 to aspartate 254 is disordered. The span at proline 233–proline 248 shows a compositional bias: low complexity. Position 281 (aspartate 281) interacts with Ca(2+). The region spanning glutamine 287–valine 604 is the Peptidase S8 domain. 3 disulfides stabilise this stretch: cysteine 313–cysteine 423, cysteine 402–cysteine 419, and cysteine 465–cysteine 478. Aspartate 316 serves as the catalytic Charge relay system. The Ca(2+) site is built by aspartate 325, glutamate 336, arginine 340, valine 343, aspartate 344, aspartate 345, aspartate 346, asparagine 348, valine 350, aspartate 352, and aspartate 353. Histidine 372 functions as the Charge relay system in the catalytic mechanism. Ca(2+)-binding residues include valine 383, asparagine 386, isoleucine 388, and isoleucine 390. Asparagine 546 is a glycosylation site (N-linked (GlcNAc...) asparagine). Serine 549 serves as the catalytic Charge relay system.

Belongs to the peptidase S8 family. Heterodimer between p54 form and prodomain p31; the interaction inhibits p54 catalytic activity. Heterodimer p31-p54 is monomeric at basic pH and dimeric at acidic pH; dimerization is driven by the N-terminal prodomain (p31). It depends on Ca(2+) as a cofactor. In terms of processing, the prodomain (p31) is cleaved, probably by autocatalysis, and remains non-covalently associated with the p54 form as an inhibitor. p54 is further cleaved into the p45/p47 forms. The relevance of the N-glycosylation is not clear. In an insect expression system, SUB1 glycosylation appears to affect its processing into the active mature form suggesting that SUB1 may not be N-glycosylated in parasites.

The protein resides in the secreted. The protein localises to the parasitophorous vacuole lumen. It catalyses the reaction Hydrolysis of proteins with broad specificity for peptide bonds, and a preference for a large uncharged residue in P1. Hydrolyzes peptide amides.. With respect to regulation, inhibited by peptidic alpha-ketoamide inhibitors. Inhibited by the alpha-ketoamide nonapeptide JMV5126 (isocaproyl-KITAQ(CO)DDEE-NH2). Inhibited by the alpha-ketoamide peptide MAM-117. Functionally, serine protease which plays an essential role in merozoite invasion of and egress from host erythrocytes by processing and activating various merozoite surface and parasitophorous vacuole proteins. This is Subtilisin-like protease 1 from Plasmodium vivax.